The following is a 510-amino-acid chain: NAD(P)H-quinone oxidoreductase subunit 2 B, chloroplastic (510 aa).

12 helical membrane-spanning segments follow: residues 24-44 (LLLFNGSFIFPECILIFGLIL), 59-79 (WFYFISSTSLVISITALLFRW), 99-119 (IFQFLILLCSTLCIPLSVEYI), 124-144 (MAITEFLLFILTATLGGMFLC), 149-169 (LITIFVAPECFSLCSYLLSGY), 183-203 (YLLMGGASSSILVHGFSWLYG), 229-249 (ISIALISITVGLGFKLSPAPF), 295-315 (WHLLLEILAILSMILGNLLAI), 323-343 (MLAYSSIGQIGYVIIGIIVGD), 354-374 (YMLFYISMNLGTFACIVLFGL), 395-415 (ALSLALCLLSLGGLPPLAGFF), and 418-438 (LYLFWCGWQAGLYFLVSIGLL).

This sequence belongs to the complex I subunit 2 family. In terms of assembly, NDH is composed of at least 16 different subunits, 5 of which are encoded in the nucleus.

Its subcellular location is the plastid. It is found in the chloroplast thylakoid membrane. It carries out the reaction a plastoquinone + NADH + (n+1) H(+)(in) = a plastoquinol + NAD(+) + n H(+)(out). The catalysed reaction is a plastoquinone + NADPH + (n+1) H(+)(in) = a plastoquinol + NADP(+) + n H(+)(out). NDH shuttles electrons from NAD(P)H:plastoquinone, via FMN and iron-sulfur (Fe-S) centers, to quinones in the photosynthetic chain and possibly in a chloroplast respiratory chain. The immediate electron acceptor for the enzyme in this species is believed to be plastoquinone. Couples the redox reaction to proton translocation, and thus conserves the redox energy in a proton gradient. The chain is NAD(P)H-quinone oxidoreductase subunit 2 B, chloroplastic from Lolium perenne (Perennial ryegrass).